Here is a 483-residue protein sequence, read N- to C-terminus: Glutamate--tRNA ligase (483 aa).

The 'HIGH' region motif lies at 9–19; sequence PSPTGFLHIGN. A 'KMSKS' region motif is present at residues 253-257; that stretch reads KLSKR. Residue K256 coordinates ATP.

Belongs to the class-I aminoacyl-tRNA synthetase family. Glutamate--tRNA ligase type 1 subfamily. Monomer.

It is found in the cytoplasm. It catalyses the reaction tRNA(Glu) + L-glutamate + ATP = L-glutamyl-tRNA(Glu) + AMP + diphosphate. Its function is as follows. Catalyzes the attachment of glutamate to tRNA(Glu) in a two-step reaction: glutamate is first activated by ATP to form Glu-AMP and then transferred to the acceptor end of tRNA(Glu). The polypeptide is Glutamate--tRNA ligase (Mycoplasma capricolum subsp. capricolum (strain California kid / ATCC 27343 / NCTC 10154)).